A 906-amino-acid chain; its full sequence is Cadherin-2 (906 aa).

The N-terminal stretch at 1-25 (MCRIAGAPRTLLPLLAALLQASVEA) is a signal peptide. Residues 26–159 (SGEIALCKTG…HNGYLQRQKR (134 aa)) constitute a propeptide that is removed on maturation. Residues S96 and S135 each carry the phosphoserine modification. Cadherin domains lie at 160–267 (DWVI…RPEF), 268–382 (LHQV…PPEF), 383–497 (TAMT…NPYF), 498–603 (APNP…DNAP), and 604–714 (QVLP…DVDR). The Extracellular portion of the chain corresponds to 160–724 (DWVIPPINLP…IVGAGLGTGA (565 aa)). E170 is a Ca(2+) binding site. An N-linked (GlcNAc...) asparagine glycan is attached at N190. D226, E228, D259, M260, N261, D262, and N263 together coordinate Ca(2+). A glycan (N-linked (GlcNAc...) asparagine) is linked at N273. 3 residues coordinate Ca(2+): D293, D295, and N301. Residue N325 is glycosylated (N-linked (GlcNAc...) asparagine). D353 is a Ca(2+) binding site. N-linked (GlcNAc...) asparagine glycosylation is found at N402, N572, N622, N651, and N692. Residues 725 to 745 (IIAILLCIIILLILVLMFVVW) traverse the membrane as a helical segment. Topologically, residues 746-906 (MKRRDKERQA…LAEMYGGGDD (161 aa)) are cytoplasmic. Over residues 863–880 (SGSTAGSLSSLNSSSSGG) the composition is skewed to low complexity. The interval 863–884 (SGSTAGSLSSLNSSSSGGEQDY) is disordered.

Homodimer (via extracellular region). Can also form heterodimers with other cadherins (via extracellular region). Dimerization occurs in trans, i.e. with a cadherin chain from another cell. Interacts with CDCP1. Interacts with PCDH8; this complex may also include TAOK2. The interaction with PCDH8 may lead to internalization through TAOK2/p38 MAPK pathway. Identified in a complex containing FGFR4, NCAM1, CDH2, PLCG1, FRS2, SRC, SHC1, GAP43 and CTTN. May interact with OBSCN (via protein kinase domain 2). Interacts with FBXO45. Cleaved by MMP24. Ectodomain cleavage leads to the generation of a soluble 90 kDa N-terminal soluble fragment and a 45 kDa membrane-bound C-terminal fragment 1 (CTF1), which is further cleaved by gamma-secretase into a 35 kDa. Cleavage in neural stem cells by MMP24 affects CDH2-mediated anchorage of neural stem cells to ependymocytes in the adult subependymal zone, leading to modulate neural stem cell quiescence. In terms of processing, may be phosphorylated by OBSCN.

Its subcellular location is the cell membrane. It is found in the sarcolemma. The protein localises to the cell junction. The protein resides in the cell surface. It localises to the desmosome. Its subcellular location is the adherens junction. In terms of biological role, calcium-dependent cell adhesion protein; preferentially mediates homotypic cell-cell adhesion by dimerization with a CDH2 chain from another cell. Cadherins may thus contribute to the sorting of heterogeneous cell types. Acts as a regulator of neural stem cells quiescence by mediating anchorage of neural stem cells to ependymocytes in the adult subependymal zone: upon cleavage by MMP24, CDH2-mediated anchorage is affected, leading to modulate neural stem cell quiescence. Plays a role in cell-to-cell junction formation between pancreatic beta cells and neural crest stem (NCS) cells, promoting the formation of processes by NCS cells. Required for proper neurite branching. Required for pre- and postsynaptic organization. CDH2 may be involved in neuronal recognition mechanism. In hippocampal neurons, may regulate dendritic spine density. This is Cadherin-2 (CDH2) from Otolemur garnettii (Small-eared galago).